A 133-amino-acid polypeptide reads, in one-letter code: Small ribosomal subunit protein uS9 (133 aa).

The segment at 111-133 (PRRSESKKFGGPGARARKQKSYR) is disordered.

This sequence belongs to the universal ribosomal protein uS9 family.

The sequence is that of Small ribosomal subunit protein uS9 from Methanosphaera stadtmanae (strain ATCC 43021 / DSM 3091 / JCM 11832 / MCB-3).